The following is a 999-amino-acid chain: Desmoglein-3 (999 aa).

A signal peptide spans 1-23; the sequence is MMGLFPRTTGALAIFVVVILVHG. Positions 24 to 49 are excised as a propeptide; sequence ELRIETKGQYDEEEMTMQQAKRRQKR. Cadherin domains lie at 50 to 158, 159 to 268, 269 to 383, and 386 to 499; these read EWVK…PVFS, QQIF…PMFR, DSQY…GIAF, and ASKT…VLEK. Residues 50-615 are Extracellular-facing; sequence EWVKFAKPCR…TRYGRPHSGR (566 aa). Residues Asn-110 and Asn-180 are each glycosylated (N-linked (GlcNAc...) asparagine). N-linked (GlcNAc...) asparagine glycosylation is found at Asn-459 and Asn-545. The chain crosses the membrane as a helical span at residues 616–640; sequence LGPAAIGLLLLGLLLLLLAPLLLLT. Residues 641-999 are Cytoplasmic-facing; sequence CDCGAGSTGG…CTEDPCSRLI (359 aa). The segment at 642 to 714 is required for interaction with CTNND1 and localization at cell-cell junctions; it reads DCGAGSTGGV…NTYARGTAVE (73 aa). Desmoglein repeat repeat units follow at residues 910-935 and 936-966; these read LSTSGSVQPAVSIPDPLQHGNYLVTE and TYSASGSLVQPSTAGFDPLLTQNVIVTERVI.

Homodimer. Part of a complex that contains DSG3, PKP1, YAP1 and YWHAG; the complex is required for localization of DSG3 and YAP1 to the cell membrane in keratinocytes. Interacts with PKP2. Interacts with CTNND1; the interaction facilitates DSG3 localization and retention at cell-cell junctions. Interacts with CDH1; the interaction is required for CDH1 localization to developing adherens junctions. Interacts with RAC1; the interaction is required for DSG3 translocation to cell-cell junctions, organization of cortical F-actin bundles and actin anchoring at cell-cell junctions. Interacts with DSC3; the interaction may limit the interaction of DSC3 with p38MAPK family members and therefore repress p38MAPK signaling activation. In terms of tissue distribution, expressed throughout the basal and spinous layer of the epidermis with weak expression in the granular layer (at protein level). Expressed in skin and mucosa (at protein level). Expressed in the basal layer of the outer root sheath of the telogen hair club, specifically at the cell membrane between the apex of the cells and the surrounding hair club (at protein level). Expression is less abundant between the lateral margins of the outer root sheath basal cells (at protein level). Also expressed in the tongue, tonsil and esophagus.

The protein resides in the cell membrane. Its subcellular location is the cell junction. It is found in the desmosome. It localises to the cytoplasm. The protein localises to the tight junction. A component of desmosome cell-cell junctions which are required for positive regulation of cellular adhesion. Required for adherens and desmosome junction assembly in response to mechanical force in keratinocytes. Required for desmosome-mediated cell-cell adhesion of cells surrounding the telogen hair club and the basal layer of the outer root sheath epithelium, consequently is essential for the anchoring of telogen hairs in the hair follicle. Required for the maintenance of the epithelial barrier via promoting desmosome-mediated intercellular attachment of suprabasal epithelium to basal cells. May play a role in the protein stability of the desmosome plaque components DSP, JUP, PKP1, PKP2 and PKP3. Required for YAP1 localization at the plasma membrane in keratinocytes in response to mechanical strain, via the formation of an interaction complex composed of DSG3, PKP1 and YWHAG. May also be involved in the positive regulation of YAP1 target gene transcription and as a result cell proliferation. Positively regulates cellular contractility and cell junction formation via organization of cortical F-actin bundles and anchoring of actin to tight junctions, in conjunction with RAC1. The cytoplasmic pool of DSG3 is required for the localization of CDH1 and CTNNB1 at developing adherens junctions, potentially via modulation of SRC activity. Inhibits keratinocyte migration via suppression of p38MAPK signaling, may therefore play a role in moderating wound healing. This chain is Desmoglein-3, found in Homo sapiens (Human).